A 187-amino-acid chain; its full sequence is MPHSTADRRLRLTRQALLAAAVVPLLAGCALVMHKPHSAGSSNPWDDSAHPLTDDQAMAQVVEPAKQIVAAADLQAVRAGFSFTSCNDQGDPPYQGTVRMAFLLQGDHDAYFQHVRAAMLSHGWIDGPPPGQYFHGITLHKNGVTANMSLALDHSYGEMILDGECRNTTDHHHDDETTNITNQLVQP.

The first 28 residues, 1 to 28 (MPHSTADRRLRLTRQALLAAAVVPLLAG), serve as a signal peptide directing secretion. Cys-29 carries N-palmitoyl cysteine lipidation. Cys-29 carries the S-diacylglycerol cysteine lipid modification.

Its subcellular location is the cell membrane. This chain is Putative lipoprotein LppJ (lppJ), found in Mycobacterium tuberculosis (strain CDC 1551 / Oshkosh).